Reading from the N-terminus, the 422-residue chain is Gamma-glutamyl phosphate reductase (422 aa).

Belongs to the gamma-glutamyl phosphate reductase family.

It localises to the cytoplasm. It catalyses the reaction L-glutamate 5-semialdehyde + phosphate + NADP(+) = L-glutamyl 5-phosphate + NADPH + H(+). Its pathway is amino-acid biosynthesis; L-proline biosynthesis; L-glutamate 5-semialdehyde from L-glutamate: step 2/2. In terms of biological role, catalyzes the NADPH-dependent reduction of L-glutamate 5-phosphate into L-glutamate 5-semialdehyde and phosphate. The product spontaneously undergoes cyclization to form 1-pyrroline-5-carboxylate. The protein is Gamma-glutamyl phosphate reductase of Nitrosomonas eutropha (strain DSM 101675 / C91 / Nm57).